Reading from the N-terminus, the 201-residue chain is Glycerol-3-phosphate acyltransferase (201 aa).

Helical transmembrane passes span 4–24 (LVAA…LVLT), 55–75 (LATL…VWVL), 80–100 (MVPV…WLGF), 110–130 (IGTL…TWLV), and 152–174 (FALY…MGFY).

Belongs to the PlsY family. As to quaternary structure, probably interacts with PlsX.

It localises to the cell inner membrane. It catalyses the reaction an acyl phosphate + sn-glycerol 3-phosphate = a 1-acyl-sn-glycero-3-phosphate + phosphate. It functions in the pathway lipid metabolism; phospholipid metabolism. In terms of biological role, catalyzes the transfer of an acyl group from acyl-phosphate (acyl-PO(4)) to glycerol-3-phosphate (G3P) to form lysophosphatidic acid (LPA). This enzyme utilizes acyl-phosphate as fatty acyl donor, but not acyl-CoA or acyl-ACP. In Paramagnetospirillum magneticum (strain ATCC 700264 / AMB-1) (Magnetospirillum magneticum), this protein is Glycerol-3-phosphate acyltransferase.